We begin with the raw amino-acid sequence, 215 residues long: Probable phosphoglycerate mutase GpmB (215 aa).

Residues R8–N15, Q21–G22, R58, K60, E82–M85, R104–R105, and G151–I152 each bind substrate. The Tele-phosphohistidine intermediate role is filled by H9. E82 serves as the catalytic Proton donor/acceptor.

The protein belongs to the phosphoglycerate mutase family. GpmB subfamily.

It catalyses the reaction (2R)-2-phosphoglycerate = (2R)-3-phosphoglycerate. Its pathway is carbohydrate degradation; glycolysis; pyruvate from D-glyceraldehyde 3-phosphate: step 3/5. This Salmonella paratyphi C (strain RKS4594) protein is Probable phosphoglycerate mutase GpmB.